A 1021-amino-acid chain; its full sequence is Ephrin type-B receptor 6 (1021 aa).

The signal sequence occupies residues 1-31 (MATEGAAQLGNRVAGMVCSLWVLLLVSSVLA). Residues 32–594 (LEEVLLDTTG…LSSQLPERLS (563 aa)) are Extracellular-facing. The region spanning 33 to 237 (EEVLLDTTGE…FSYTCPAVLR (205 aa)) is the Eph LBD domain. Residues 163–182 (SFPSSSSSSSSSSSAAWAVG) form a disordered region. The span at 166 to 176 (SSSSSSSSSSS) shows a compositional bias: low complexity. Fibronectin type-III domains lie at 369-486 (PPSA…TSHE) and 487-582 (VPSA…TLPQ). N-linked (GlcNAc...) asparagine glycosylation is present at Asn480. Residues 595 to 615 (LVIGSILGALAFLLLAAITVL) traverse the membrane as a helical segment. The Cytoplasmic segment spans residues 616–1021 (AVVFQRKRRG…HLRQQGSVEV (406 aa)). Positions 670-919 (IKIEEVIGTG…QLVAAFDKMI (250 aa)) constitute a Protein kinase domain. 676–684 (IGTGSFGEV) lines the ATP pocket. Residues 948 to 1012 (PCLDSPQAWL…LHHIQLLQQH (65 aa)) enclose the SAM domain. The PDZ-binding motif lies at 1019 to 1021 (VEV).

The protein belongs to the protein kinase superfamily. Tyr protein kinase family. Ephrin receptor subfamily. Interacts with CBL and EPHB1. Interacts with FYN; this interaction takes place in a ligand-independent manner. Ligand-binding increases phosphorylation on tyrosine residues. Phosphorylation on tyrosine residues is mediated by transphosphorylation by the catalytically active EPHB1 in a ligand-independent manner. Tyrosine phosphorylation of the receptor may act as a switch on the functional transition from cell adhesion/attraction to de-adhesion/repulsion. In terms of tissue distribution, expressed in brain. Expressed in non invasive breast carcinoma cell lines (at protein level). Strong expression in brain and pancreas, and weak expression in other tissues, such as heart, placenta, lung, liver, skeletal muscle and kidney. Expressed in breast non invasive tumors but not in metastatic lesions. Isoform 3 is expressed in cell lines of glioblastomas, anaplastic astrocytomas, gliosarcomas and astrocytomas. Isoform 3 is not detected in normal tissues.

The protein resides in the membrane. It localises to the secreted. Functionally, kinase-defective receptor for members of the ephrin-B family. Binds to ephrin-B1 and ephrin-B2. Modulates cell adhesion and migration by exerting both positive and negative effects upon stimulation with ephrin-B2. Inhibits JNK activation, T-cell receptor-induced IL-2 secretion and CD25 expression upon stimulation with ephrin-B2. The chain is Ephrin type-B receptor 6 (EPHB6) from Homo sapiens (Human).